Here is a 317-residue protein sequence, read N- to C-terminus: MQKTSFLNKIDPLLKLWFWLISLVVAFLPLGLYGLVIINLVFLTLVVISEKRVKSALIILSWMLFFLWFNVIVNGFIFLPNTALSVDQNHNFLGSFIYSGGNNFGGVSWWSFNLRSFLRSFVIALRISMLFSASFLLTTSSSIYELAWAVERFFKFLKLFHIKVQPISILLAVIFKLLPTVKSEIIRIKQAQATRGFIYNKCSFLNPFKIKTLFIPVLLSTVKKTETTAFALQAKGYDLNNTNRTHYPLKYNLLNGVFLLVGLLLFSILLIANNWNLVYWENPNYSFNFDKQNFIFLRAINSNNLLYFWQIELIAIG.

7 consecutive transmembrane segments (helical) span residues 18–38 (FWLI…LVII), 58–78 (IILS…GFIF), 92–112 (FLGS…WWSF), 130–150 (LFSA…AWAV), 159–179 (LFHI…KLLP), 202–222 (CSFL…LSTV), and 252–272 (NLLN…LLIA).

It belongs to the CbiQ family.

Its subcellular location is the cell membrane. This is an uncharacterized protein from Mycoplasma genitalium (strain ATCC 33530 / DSM 19775 / NCTC 10195 / G37) (Mycoplasmoides genitalium).